The chain runs to 301 residues: Ornithine carbamoyltransferase (301 aa).

Carbamoyl phosphate contacts are provided by residues Arg-100 and 127–130 (HPCQ). Residues Asn-158, Asp-221, and 225–226 (SM) each bind L-ornithine. Carbamoyl phosphate-binding residues include Cys-260 and Arg-288.

Belongs to the aspartate/ornithine carbamoyltransferase superfamily. OTCase family. In terms of assembly, the enzyme is present as a mixture of trimers and dodecamers, with the relative proportions of the two forms depending on the salt concentration. In addition, the trimeric fraction could reassociate into dodecamers when the salt concentration is increased. It appears that in vivo, the main fraction is in the dodecameric form.

It localises to the cytoplasm. It carries out the reaction carbamoyl phosphate + L-ornithine = L-citrulline + phosphate + H(+). It functions in the pathway amino-acid biosynthesis; L-arginine biosynthesis; L-arginine from L-ornithine and carbamoyl phosphate: step 1/3. Its activity is regulated as follows. Inhibited by excess of arginine and by the bisubstrate delta-N-phosphonoacetyl-L-ornithine (PALO). In terms of biological role, reversibly catalyzes the transfer of the carbamoyl group from carbamoyl phosphate (CP) to the N(epsilon) atom of ornithine (ORN) to produce L-citrulline, which is a substrate for argininosuccinate synthetase, the enzyme involved in the final step in arginine biosynthesis. This Moritella abyssi protein is Ornithine carbamoyltransferase.